We begin with the raw amino-acid sequence, 215 residues long: Ribose-5-phosphate isomerase A (215 aa).

Residues 26 to 29 (TGST), 79 to 82 (DGAD), and 92 to 95 (KGGG) contribute to the substrate site. Catalysis depends on E101, which acts as the Proton acceptor. K119 lines the substrate pocket.

The protein belongs to the ribose 5-phosphate isomerase family. In terms of assembly, homodimer.

The catalysed reaction is aldehydo-D-ribose 5-phosphate = D-ribulose 5-phosphate. It functions in the pathway carbohydrate degradation; pentose phosphate pathway; D-ribose 5-phosphate from D-ribulose 5-phosphate (non-oxidative stage): step 1/1. Functionally, catalyzes the reversible conversion of ribose-5-phosphate to ribulose 5-phosphate. This is Ribose-5-phosphate isomerase A from Xanthomonas oryzae pv. oryzae (strain PXO99A).